The chain runs to 430 residues: Target of rapamycin complex 1 subunit toc1 (430 aa).

2 positions are modified to phosphoserine: S204 and S399.

The target of rapamycin complex 1 (TORC1) is composed of at least mip1, pop3/wat1, tco89, toc1 and tor2.

It localises to the cytoplasm. In terms of biological role, component of TORC1, which regulates multiple cellular processes to control cell growth in response to environmental signals. Tor2 is essential for growth. Nutrient limitation and environmental stress signals cause inactivation of TORC1. Active TORC1 positively controls cell growth and ribosome biogenesis by regulating ribosomal protein gene expression. TORC1 negatively controls G1 cell-cycle arrest, sexual development and amino acid uptake. Represses mating, meiosis and sporulation efficiency by interfering with the functions of the transcription factor ste11 and the meiosis-promoting RNA-binding protein mei2. This Schizosaccharomyces pombe (strain 972 / ATCC 24843) (Fission yeast) protein is Target of rapamycin complex 1 subunit toc1.